Reading from the N-terminus, the 479-residue chain is Ribosomal RNA small subunit methyltransferase F (479 aa).

Residues 125-131, Glu-149, Asp-176, and Asp-194 contribute to the S-adenosyl-L-methionine site; that span reads AAAPGSK. Catalysis depends on Cys-247, which acts as the Nucleophile.

The protein belongs to the class I-like SAM-binding methyltransferase superfamily. RsmB/NOP family.

It localises to the cytoplasm. It carries out the reaction cytidine(1407) in 16S rRNA + S-adenosyl-L-methionine = 5-methylcytidine(1407) in 16S rRNA + S-adenosyl-L-homocysteine + H(+). Specifically methylates the cytosine at position 1407 (m5C1407) of 16S rRNA. The sequence is that of Ribosomal RNA small subunit methyltransferase F from Escherichia coli (strain UTI89 / UPEC).